The following is a 61-amino-acid chain: Large ribosomal subunit protein uL30 (61 aa).

The protein belongs to the universal ribosomal protein uL30 family. In terms of assembly, part of the 50S ribosomal subunit.

This is Large ribosomal subunit protein uL30 from Mycobacterium sp. (strain KMS).